Consider the following 274-residue polypeptide: MSLQETIIQELGVKPVIDAQEEIRRSIDFLKRYLKKHPFLKTFVLGISGGQDSTLAGRLAQLAMEELRAETGDDSYKFIAVRLPYGVQADEADAQKALAFIQPDVSLVVNIKESVDAMTAAVEATGSPVSDFNKGNIKARCRMIAQYALAGSHSGAVIGTDHAAENITGFFTKFGDGGADILPLYRLNKRQGKQLLQKLGAEPALYEKIPTADLEEDKPGLADEVALGVTYAEIDDYLEGKTISPEAQATIENWWHKGQHKRRLPITVFDDFWE.

An ATP-binding site is contributed by 46–53; it reads GISGGQDS. Asp-52 is a Mg(2+) binding site. Arg-140 is a binding site for deamido-NAD(+). Thr-160 is a binding site for ATP. Residue Glu-165 participates in Mg(2+) binding. 2 residues coordinate deamido-NAD(+): Lys-173 and Asp-180. 2 residues coordinate ATP: Lys-189 and Thr-211. 260 to 261 provides a ligand contact to deamido-NAD(+); it reads HK.

It belongs to the NAD synthetase family. As to quaternary structure, homodimer.

The catalysed reaction is deamido-NAD(+) + NH4(+) + ATP = AMP + diphosphate + NAD(+) + H(+). It functions in the pathway cofactor biosynthesis; NAD(+) biosynthesis; NAD(+) from deamido-NAD(+) (ammonia route): step 1/1. Its function is as follows. Catalyzes the ATP-dependent amidation of deamido-NAD to form NAD. Uses ammonia as a nitrogen source. The chain is NH(3)-dependent NAD(+) synthetase from Streptococcus pneumoniae (strain Hungary19A-6).